Here is a 185-residue protein sequence, read N- to C-terminus: Small ribosomal subunit protein uS4 (185 aa).

Residues 108 to 170 (RRLQTLVYRK…GKSPFVDASH (63 aa)) enclose the S4 RNA-binding domain.

It belongs to the universal ribosomal protein uS4 family. Part of the 30S ribosomal subunit. Contacts protein S5. The interaction surface between S4 and S5 is involved in control of translational fidelity.

One of the primary rRNA binding proteins, it binds directly to 16S rRNA where it nucleates assembly of the body of the 30S subunit. In terms of biological role, with S5 and S12 plays an important role in translational accuracy. The polypeptide is Small ribosomal subunit protein uS4 (Methanoregula boonei (strain DSM 21154 / JCM 14090 / 6A8)).